Reading from the N-terminus, the 274-residue chain is tRNA-cytidine(32) 2-sulfurtransferase (274 aa).

A PP-loop motif motif is present at residues 40–45 (SGGKDS). [4Fe-4S] cluster contacts are provided by Cys-115, Cys-118, and Cys-206.

It belongs to the TtcA family. Homodimer. Mg(2+) serves as cofactor. It depends on [4Fe-4S] cluster as a cofactor.

It localises to the cytoplasm. It catalyses the reaction cytidine(32) in tRNA + S-sulfanyl-L-cysteinyl-[cysteine desulfurase] + AH2 + ATP = 2-thiocytidine(32) in tRNA + L-cysteinyl-[cysteine desulfurase] + A + AMP + diphosphate + H(+). The protein operates within tRNA modification. Functionally, catalyzes the ATP-dependent 2-thiolation of cytidine in position 32 of tRNA, to form 2-thiocytidine (s(2)C32). The sulfur atoms are provided by the cysteine/cysteine desulfurase (IscS) system. The protein is tRNA-cytidine(32) 2-sulfurtransferase of Azotobacter vinelandii (strain DJ / ATCC BAA-1303).